The primary structure comprises 420 residues: uncharacterized protein (420 aa).

Helical transmembrane passes span 26-46 (IFLL…QSVI), 66-86 (SAIK…WFTF), 231-251 (VILA…ATVL), 276-296 (IPVN…PSLL), 317-337 (GFLV…SIAF), and 369-389 (IDIL…FLTI).

This sequence belongs to the CbiQ family.

The protein localises to the cell membrane. This is an uncharacterized protein from Mycoplasma genitalium (strain ATCC 33530 / DSM 19775 / NCTC 10195 / G37) (Mycoplasmoides genitalium).